Consider the following 526-residue polypeptide: MRLRNGTVATALVFVTSFLTLSWYTTWQNGKEKLIAYQREFLALKERLRVAEHRISQRSSELNTIVQQFRRAGAETNGNNTIKLLKELTSKKSLQVPSIYYHLPHLLQNERSLQPAVQIGSGRTGVSIVMGIPTVKREVKSYLIETLHSLIDNLYPEEKLDCVIVVFIGETDLDYVHSVVANLEKEFSREISSGLLEVISPPESYYPDLTNLKETFGDSKERVRWRTKQNLDYCFLMMYAQEKGIYYIQLEDDIIVKQNYFNTIKNFALQLSSEEWMILEFSQLGFIGKMFQAPDLALVVEFILMFYKEKPIDWLLDHILWVKVCNPEKDAKHCDRQKANLRIRFRPSLFQHVGLHSSLSGKIQKLTDKDYMKPLLLKIHVNPPAEVSTSLKVYQGHTLEKTYMGEDFFWAITPTAGDYILFKFDKPVNVESYLFHSGNQEHPGDILLNTTVEVLPLKSDSLEISKETKDKRLEDGYFRIGKFEYGVAEGIVDPGLNPISAFRLSVIQNSAVWAILNEIHIKKVTS.

Residues 1–6 lie on the Cytoplasmic side of the membrane; sequence MRLRNG. Residues 7-27 traverse the membrane as a helical; Signal-anchor for type II membrane protein segment; sequence TVATALVFVTSFLTLSWYTTW. Residues 28–63 adopt a coiled-coil conformation; the sequence is QNGKEKLIAYQREFLALKERLRVAEHRISQRSSELN. At 28-526 the chain is on the lumenal side; that stretch reads QNGKEKLIAY…NEIHIKKVTS (499 aa). Residue N449 is glycosylated (N-linked (GlcNAc...) asparagine). Residue S465 is modified to Phosphoserine.

This sequence belongs to the glycosyltransferase 54 family. Requires a divalent metal cation as cofactor. In terms of processing, N-glycosylated.

Its subcellular location is the golgi apparatus membrane. The protein localises to the secreted. The enzyme catalyses N(4)-{beta-D-GlcNAc-(1-&gt;2)-alpha-D-Man-(1-&gt;3)-[beta-D-GlcNAc-(1-&gt;2)-alpha-D-Man-(1-&gt;6)]-beta-D-Man-(1-&gt;4)-beta-D-GlcNAc-(1-&gt;4)-beta-D-GlcNAc}-L-asparaginyl-[protein] + UDP-N-acetyl-alpha-D-glucosamine = N(4)-{beta-D-GlcNAc-(1-&gt;2)-[beta-D-GlcNAc-(1-&gt;4)]-alpha-D-Man-(1-&gt;3)-[beta-D-GlcNAc-(1-&gt;2)-alpha-D-Man-(1-&gt;6)]-beta-D-Man-(1-&gt;4)-beta-D-GlcNAc-(1-&gt;4)-beta-D-GlcNAc}-L-asparaginyl-[protein] + UDP + H(+). The catalysed reaction is an N(4)-{beta-D-GlcNAc-(1-&gt;2)-alpha-D-Man-(1-&gt;3)-[alpha-D-Man-(1-&gt;6)]-beta-D-Man-(1-&gt;4)-beta-D-GlcNAc-(1-&gt;4)-beta-D-GlcNAc}-L-asparaginyl-[protein] + UDP-N-acetyl-alpha-D-glucosamine = an N(4)-{beta-D-GlcNAc-(1-&gt;2)-[beta-D-GlcNAc-(1-&gt;4)]-alpha-D-Man-(1-&gt;3)-[alpha-D-Man-(1-&gt;6)]-beta-D-Man-(1-&gt;4)-beta-D-GlcNAc-(1-&gt;4)-beta-D-GlcNAc}-L-asparaginyl-[protein] + UDP + H(+). It carries out the reaction an N(4)-{beta-D-GlcNAc-(1-&gt;2)-alpha-D-Man-(1-&gt;3)-[beta-D-GlcNAc-(1-&gt;2)-[beta-D-GlcNAc-(1-&gt;6)]-alpha-D-Man-(1-&gt;6)]-beta-D-Man-(1-&gt;4)-beta-D-GlcNAc-(1-&gt;4)-beta-D-GlcNAc}-L-asparaginyl-[protein] + UDP-N-acetyl-alpha-D-glucosamine = an N(4)-{beta-D-GlcNAc-(1-&gt;2)-[beta-D-GlcNAc-(1-&gt;4)]-alpha-D-Man-(1-&gt;3)-[beta-D-GlcNAc-(1-&gt;2)-[beta-D-GlcNAc-(1-&gt;6)]-alpha-D-Man-(1-&gt;6)]-beta-D-Man-(1-&gt;4)-beta-D-GlcNAc-(1-&gt;4)-beta-D-GlcNAc}-L-asparaginyl-[protein] + UDP + H(+). It catalyses the reaction an N(4)-{beta-D-GlcNAc-(1-&gt;2)-alpha-D-Man-(1-&gt;3)-[beta-D-GlcNAc-(1-&gt;2)-alpha-D-Man-(1-&gt;6)]-beta-D-Man-(1-&gt;4)-beta-D-GlcNAc-(1-&gt;4)-[alpha-L-Fuc-(1-&gt;6)]-beta-D-GlcNAc}-L-asparaginyl-[protein] + UDP-N-acetyl-alpha-D-glucosamine = N(4)-{beta-D-GlcNAc-(1-&gt;2)-[beta-D-GlcNAc-(1-&gt;4)]-alpha-D-Man-(1-&gt;3)-[beta-D-GlcNAc-(1-&gt;2)-alpha-D-Man-(1-&gt;6)]-beta-D-Man-(1-&gt;4)-beta-D-GlcNAc-(1-&gt;4)-[alpha-L-Fuc-(1-&gt;6)]-beta-D-GlcNAc}-asparaginyl-[protein] + UDP + H(+). The enzyme catalyses an N(4)-{beta-D-GlcNAc-(1-&gt;2)-alpha-D-Man-(1-&gt;3)-[beta-D-Gal-(1-&gt;4)-beta-D-GlcNAc-(1-&gt;2)-alpha-D-Man-(1-&gt;6)]-beta-D-Man-(1-&gt;4)-beta-D-GlcNAc-(1-&gt;4)-beta-D-GlcNAc}-L-asparaginyl-[protein] + UDP-N-acetyl-alpha-D-glucosamine = an N(4)-{beta-D-GlcNAc-(1-&gt;2)-[beta-D-GlcNAc-(1-&gt;4)]-alpha-D-Man-(1-&gt;3)-[beta-D-Gal-(1-&gt;4)-beta-D-GlcNAc-(1-&gt;2)-alpha-D-Man-(1-&gt;6)]-beta-D-Man-(1-&gt;4)-beta-D-GlcNAc-(1-&gt;4)-beta-D-GlcNAc}-L-asparaginyl-[protein] + UDP + H(+). The catalysed reaction is N(4)-{beta-D-GlcNAc-(1-&gt;2)-alpha-D-Man-(1-&gt;3)-[alpha-D-Man-(1-&gt;3)-{alpha-D-Man-(1-&gt;6)}-alpha-D-Man-(1-&gt;6)]-beta-D-Man-(1-&gt;4)-beta-D-GlcNAc-(1-&gt;4)-beta-D-GlcNAc}-asparaginyl-[protein] + UDP-N-acetyl-alpha-D-glucosamine = N(4)-{beta-D-GlcNAc-(1-&gt;2)-[beta-D-GlcNAc-(1-&gt;4)]-alpha-D-Man-(1-&gt;3)-[alpha-D-Man-(1-&gt;3)-{alpha-D-Man-(1-&gt;6)}-alpha-D-Man-(1-&gt;6)]-beta-D-Man-(1-&gt;4)-beta-D-GlcNAc-(1-&gt;4)-beta-D-GlcNAc}-asparaginyl-[protein] + UDP + H(+). It carries out the reaction N(4)-{beta-D-GlcNAc-(1-&gt;2)-alpha-D-Man-(1-&gt;3)-beta-D-Man-(1-&gt;4)-beta-D-GlcNAc-(1-&gt;4)-beta-D-GlcNAc}-asparaginyl-[protein] + UDP-N-acetyl-alpha-D-glucosamine = N(4)-{beta-D-GlcNAc-(1-&gt;2)-[beta-D-GlcNAc-(1-&gt;4)]-alpha-D-Man-(1-&gt;3)-beta-D-Man-(1-&gt;4)-beta-D-GlcNAc-(1-&gt;4)-beta-D-GlcNAc}-asparaginyl-[protein] + UDP + H(+). Its pathway is protein modification; protein glycosylation. Inhibited by UDP. Glycosyltransferase that catalyze the transfer of GlcNAc from UDP-GlcNAc to the GlcNAcbeta1-2Manalpha1-3 arm of the core structure of N-linked glycans through a beta1-4 linkage and participates in the production of tri- and tetra-antennary N-linked sugar chains. Involved in glucose transport by mediating SLC2A2/GLUT2 glycosylation, thereby controlling cell-surface expression of SLC2A2 in pancreatic beta cells. This Rattus norvegicus (Rat) protein is Alpha-1,3-mannosyl-glycoprotein 4-beta-N-acetylglucosaminyltransferase A.